A 533-amino-acid chain; its full sequence is UDP-glucuronosyltransferase 1-2 (533 aa).

A signal peptide spans 1-27 (MDTGLCVPLRGISGLLLLLCALPWAEG). N-linked (GlcNAc...) asparagine glycosylation is found at Asn-141, Asn-295, and Asn-433. A helical membrane pass occupies residues 491 to 511 (VIGFLLAIVLTVVFIVFKCCA).

Belongs to the UDP-glycosyltransferase family. In terms of tissue distribution, expressed in kidney.

It is found in the microsome. Its subcellular location is the endoplasmic reticulum membrane. The enzyme catalyses glucuronate acceptor + UDP-alpha-D-glucuronate = acceptor beta-D-glucuronoside + UDP + H(+). Its function is as follows. UDPGT is of major importance in the conjugation and subsequent elimination of potentially toxic xenobiotics and endogenous compounds. This is UDP-glucuronosyltransferase 1-2 (Ugt1a2) from Mus musculus (Mouse).